The following is a 297-amino-acid chain: uncharacterized protein (297 aa).

Glu46 is a catalytic residue.

It belongs to the PhzF family. As to quaternary structure, homodimer and homotetramer.

This is an uncharacterized protein from Escherichia coli O157:H7.